We begin with the raw amino-acid sequence, 203 residues long: Small ribosomal subunit protein uS4 (203 aa).

The segment at 22–45 (TGKELARRPYKPGQHGPNSRGKVS) is disordered. One can recognise an S4 RNA-binding domain in the interval 93–156 (QRLDNVVYRL…QNISTIKEAV (64 aa)).

This sequence belongs to the universal ribosomal protein uS4 family. Part of the 30S ribosomal subunit. Contacts protein S5. The interaction surface between S4 and S5 is involved in control of translational fidelity.

Functionally, one of the primary rRNA binding proteins, it binds directly to 16S rRNA where it nucleates assembly of the body of the 30S subunit. With S5 and S12 plays an important role in translational accuracy. This is Small ribosomal subunit protein uS4 from Enterococcus faecalis (strain ATCC 700802 / V583).